The chain runs to 723 residues: Methionine--tRNA ligase (723 aa).

The 'HIGH' region signature appears at 11–21 (PYANGPIHAGH). Zn(2+) contacts are provided by cysteine 143, cysteine 146, cysteine 156, and cysteine 159. Positions 344–348 (KFSTS) match the 'KMSKS' region motif. Threonine 347 provides a ligand contact to ATP. Residues 623–723 (DFAKLDLRVG…KEVKLGAKVR (101 aa)) form the tRNA-binding domain.

The protein belongs to the class-I aminoacyl-tRNA synthetase family. MetG type 1 subfamily. As to quaternary structure, homodimer. Zn(2+) serves as cofactor.

The protein resides in the cytoplasm. It carries out the reaction tRNA(Met) + L-methionine + ATP = L-methionyl-tRNA(Met) + AMP + diphosphate. Functionally, is required not only for elongation of protein synthesis but also for the initiation of all mRNA translation through initiator tRNA(fMet) aminoacylation. The polypeptide is Methionine--tRNA ligase (Pyrococcus horikoshii (strain ATCC 700860 / DSM 12428 / JCM 9974 / NBRC 100139 / OT-3)).